A 330-amino-acid chain; its full sequence is Ribose operon repressor (330 aa).

Residues 2–56 enclose the HTH lacI-type domain; that stretch reads ATMKDVARLAGVSTSTVSHVINKDRFVSEAITAKVEAAIKELNYAPSALARSLKL. A DNA-binding region (H-T-H motif) is located at residues 4–23; it reads MKDVARLAGVSTSTVSHVIN.

In terms of biological role, transcriptional repressor for the ribose rbsDACBK operon. RbsR binds to a region of perfect dyad symmetry spanning the rbs operon transcriptional start site. The affinity for the rbs operator is reduced by addition of ribose, consistent with ribose being the inducer of the operon. This is Ribose operon repressor (rbsR) from Escherichia coli O6:H1 (strain CFT073 / ATCC 700928 / UPEC).